The following is a 372-amino-acid chain: tRNA-specific 2-thiouridylase MnmA (372 aa).

Residues 9–16 (GMSGGVDS) and Met-35 each bind ATP. The interval 95 to 97 (NPD) is interaction with target base in tRNA. Residue Cys-100 is the Nucleophile of the active site. Cysteines 100 and 201 form a disulfide. ATP is bound at residue Gly-124. An interaction with tRNA region spans residues 151–153 (KDQ). The active-site Cysteine persulfide intermediate is Cys-201. The tract at residues 317–318 (RY) is interaction with tRNA.

It belongs to the MnmA/TRMU family.

The protein localises to the cytoplasm. The enzyme catalyses S-sulfanyl-L-cysteinyl-[protein] + uridine(34) in tRNA + AH2 + ATP = 2-thiouridine(34) in tRNA + L-cysteinyl-[protein] + A + AMP + diphosphate + H(+). Catalyzes the 2-thiolation of uridine at the wobble position (U34) of tRNA, leading to the formation of s(2)U34. In Janthinobacterium sp. (strain Marseille) (Minibacterium massiliensis), this protein is tRNA-specific 2-thiouridylase MnmA.